Here is a 647-residue protein sequence, read N- to C-terminus: DNA mismatch repair protein MutL (647 aa).

The protein belongs to the DNA mismatch repair MutL/HexB family.

In terms of biological role, this protein is involved in the repair of mismatches in DNA. It is required for dam-dependent methyl-directed DNA mismatch repair. May act as a 'molecular matchmaker', a protein that promotes the formation of a stable complex between two or more DNA-binding proteins in an ATP-dependent manner without itself being part of a final effector complex. The sequence is that of DNA mismatch repair protein MutL from Bacillus thuringiensis (strain Al Hakam).